Reading from the N-terminus, the 685-residue chain is Probable glucan endo-1,3-beta-glucosidase btgC (685 aa).

Disordered regions lie at residues 1 to 96, 119 to 168, and 180 to 202; these read MSGP…NLGP, GIDA…RDSY, and PAGQLTPGGSNPSQRSLFDSPYQ. The Cytoplasmic segment spans residues 1–312; it reads MSGPHRSFSF…PTPGGGSRKR (312 aa). Polar residues-rich tracts occupy residues 47 to 61 and 73 to 90; these read SARSQAMGSSPSSGF and GQNSGHTQAMRTNSTTPG. A helical; Signal-anchor for type II membrane protein transmembrane segment spans residues 313–333; sequence GWIVGLALAFIVVGAIVGGAV. Residues 334 to 685 are Extracellular-facing; the sequence is GGTLGNRENE…IPDCGGKTAA (352 aa). Residues 335–369 are disordered; that stretch reads GTLGNRENEAPDTTKSASSDTESNGDLNKDSSEIK. Polar residues predominate over residues 345–360; the sequence is PDTTKSASSDTESNGD. N405, N428, and N456 each carry an N-linked (GlcNAc...) asparagine glycan. E488 serves as the catalytic Proton donor. E587 (nucleophile) is an active-site residue. A glycan (N-linked (GlcNAc...) asparagine) is linked at N632.

It belongs to the glycosyl hydrolase 17 family.

Its subcellular location is the cell membrane. The enzyme catalyses Hydrolysis of (1-&gt;3)-beta-D-glucosidic linkages in (1-&gt;3)-beta-D-glucans.. Its function is as follows. Glucanases play a role in cell expansion during growth, in cell-cell fusion during mating, and in spore release during sporulation. This enzyme may be involved in beta-glucan degradation. Active on laminarin and lichenan. The chain is Probable glucan endo-1,3-beta-glucosidase btgC (btgC) from Aspergillus oryzae (strain ATCC 42149 / RIB 40) (Yellow koji mold).